The sequence spans 200 residues: Small ribosomal subunit protein uS4 (200 aa).

Residues 22–43 are disordered; sequence TGKELERRPYAPGQHGPTQRKK. One can recognise an S4 RNA-binding domain in the interval 92–170; sequence QRLDNIVYRL…VPEYVTFDAE (79 aa).

Belongs to the universal ribosomal protein uS4 family. In terms of assembly, part of the 30S ribosomal subunit. Contacts protein S5. The interaction surface between S4 and S5 is involved in control of translational fidelity.

Functionally, one of the primary rRNA binding proteins, it binds directly to 16S rRNA where it nucleates assembly of the body of the 30S subunit. In terms of biological role, with S5 and S12 plays an important role in translational accuracy. The polypeptide is Small ribosomal subunit protein uS4 (Listeria monocytogenes serotype 4b (strain F2365)).